A 189-amino-acid polypeptide reads, in one-letter code: Peptide deformylase (189 aa).

The Fe cation site is built by cysteine 116 and histidine 159. Glutamate 160 is an active-site residue. Histidine 163 contacts Fe cation.

The protein belongs to the polypeptide deformylase family. It depends on Fe(2+) as a cofactor.

It catalyses the reaction N-terminal N-formyl-L-methionyl-[peptide] + H2O = N-terminal L-methionyl-[peptide] + formate. Removes the formyl group from the N-terminal Met of newly synthesized proteins. Requires at least a dipeptide for an efficient rate of reaction. N-terminal L-methionine is a prerequisite for activity but the enzyme has broad specificity at other positions. The protein is Peptide deformylase of Limosilactobacillus fermentum (strain NBRC 3956 / LMG 18251) (Lactobacillus fermentum).